The following is a 275-amino-acid chain: Transmembrane protein 45A (275 aa).

A run of 5 helical transmembrane segments spans residues 7 to 27 (HALPGTFFFIIGLWWCTKSIL), 51 to 71 (ILEGITIVGMALTGMAGEQFI), 100 to 120 (FFFGLLGVADILCFTISSLPV), 150 to 170 (IFVHQLLVLVVFLTGLVAFLE), and 218 to 238 (ILFLTICFCWHYAVTIVIVGM).

Belongs to the TMEM45 family.

The protein localises to the membrane. The chain is Transmembrane protein 45A (TMEM45A) from Homo sapiens (Human).